A 227-amino-acid chain; its full sequence is MRRAEVARLIDHTLLAPAATDEEVLALCAEAARLGVGAVCVAPTHVYLAAASTYRSSHEAEPAFAVASVIGFPHGTHLTVIKAEEARRAVADGATEIDMVIDIANALDENWRAIETEISEVRLSVPPHVILKVILETALLPDANIIAACRAAEAGGAEFVKTSTGFHPAGGASVRAVRAMAEAVGGRLGIKASGGIRTAEKAKDMLEAGATRLGLSASADVLAGFPA.

The Proton donor/acceptor role is filled by D98. The active-site Schiff-base intermediate with acetaldehyde is the K161. The active-site Proton donor/acceptor is the K191.

This sequence belongs to the DeoC/FbaB aldolase family. DeoC type 1 subfamily.

The protein resides in the cytoplasm. It catalyses the reaction 2-deoxy-D-ribose 5-phosphate = D-glyceraldehyde 3-phosphate + acetaldehyde. It functions in the pathway carbohydrate degradation; 2-deoxy-D-ribose 1-phosphate degradation; D-glyceraldehyde 3-phosphate and acetaldehyde from 2-deoxy-alpha-D-ribose 1-phosphate: step 2/2. Its function is as follows. Catalyzes a reversible aldol reaction between acetaldehyde and D-glyceraldehyde 3-phosphate to generate 2-deoxy-D-ribose 5-phosphate. This Frankia alni (strain DSM 45986 / CECT 9034 / ACN14a) protein is Deoxyribose-phosphate aldolase.